A 449-amino-acid chain; its full sequence is Putative gustatory receptor 77a (449 aa).

Over 1-27 (MPLPLGDPLALAVSPQLGYIRITAMPR) the chain is Cytoplasmic. A helical transmembrane segment spans residues 28-50 (WLQLPGMSALGILYSLTRVFGLM). The Extracellular portion of the chain corresponds to 51–70 (ATANWSPRGIKRVRQSLYLR). Residues 71–93 (IHGCVMLIFVGCFSPFAFWCIFQ) traverse the membrane as a helical segment. At 94-102 (RMAFLRQNR) the chain is on the cytoplasmic side. Residues 103–125 (ILLMIGFNRYVLLLVCAFMTLWI) traverse the membrane as a helical segment. At 126–205 (HCFKQAEIIG…VRRNFMYACS (80 aa)) the chain is on the extracellular side. A helical membrane pass occupies residues 206–228 (LVFVSVCQAILQLSLGMYTMAIL). Residues 229–298 (FLGHLVRHSN…LLKLHRSICS (70 aa)) lie on the Cytoplasmic side of the membrane. Residues 299 to 321 (LCAVQAVCFLGFVPLECTIHLFF) form a helical membrane-spanning segment. Over 322-340 (TYFMKYSKFILRKYGRSFP) the chain is Extracellular. The helical transmembrane segment at 341–363 (LNYFAIAFLVGLFTNLLLVILPT) threads the bilayer. Residues 364 to 420 (YYSERRFNCTREIIKGGGLAFPSRITVKQLRHTMHFYGLYLKNVEHVFAVSACGLFK) lie on the Cytoplasmic side of the membrane. A helical membrane pass occupies residues 421 to 443 (LNNAILFCIVGAILEYLMILIQF). Over 444 to 449 (DKVLNK) the chain is Extracellular.

Belongs to the insect chemoreceptor superfamily. Gustatory receptor (GR) family. Gr77a subfamily. As to expression, in larvae, is expressed in dorsal pharyngeal sense organ.

The protein resides in the cell membrane. In terms of biological role, probable gustatory receptor which mediates acceptance or avoidance behavior, depending on its substrates. The sequence is that of Putative gustatory receptor 77a (Gr77a) from Drosophila melanogaster (Fruit fly).